The sequence spans 343 residues: MNKRINEVSGRPIGEYLSRDISDFQRVSRTLFECFSSLATGATLNSQQLQQIQLPIDQISNNATPNMVLQLMNHLIDVDKIYQNTLKKLEKHQKIQKEITEIQKEIEEKDKLISTLALNLKDIESFLENELSQDNVNINNGNASDGIVNEVLIDLKQPDDAASMDNIVNREVSPEDLISYAHKISGTTSAPFGYQPNAPLASLFKPPAPQDEMMRSSVLFTKPPPHVLKYYGLAEIDVTTPTMAANISSPFSIGGNVGDVTTPTSKEQEDQQQQQQQQQPQQQLSQSQQSQQQTESELQPIQSILQPPQQLNIDLDLNPDLDSSGDDDDEDDDDEESEEVEWD.

A coiled-coil region spans residues 86–125 (LKKLEKHQKIQKEITEIQKEIEEKDKLISTLALNLKDIES). A disordered region spans residues 247 to 343 (ISSPFSIGGN…DEESEEVEWD (97 aa)). Over residues 271–316 (QQQQQQQQQPQQQLSQSQQSQQQTESELQPIQSILQPPQQLNIDLD) the composition is skewed to low complexity. Residues 317-343 (LNPDLDSSGDDDDEDDDDEESEEVEWD) show a composition bias toward acidic residues.

Belongs to the Mediator complex subunit 4 family. In terms of assembly, component of the Mediator complex.

The protein resides in the nucleus. Its function is as follows. Component of the Mediator complex, a coactivator involved in the regulated transcription of nearly all RNA polymerase II-dependent genes. Mediator functions as a bridge to convey information from gene-specific regulatory proteins to the basal RNA polymerase II transcription machinery. Mediator is recruited to promoters by direct interactions with regulatory proteins and serves as a scaffold for the assembly of a functional preinitiation complex with RNA polymerase II and the general transcription factors. This chain is Putative mediator of RNA polymerase II transcription subunit 4 (med4), found in Dictyostelium discoideum (Social amoeba).